Reading from the N-terminus, the 345-residue chain is Fructose-bisphosphate aldolase, plasmid (345 aa).

Ser-50 provides a ligand contact to D-glyceraldehyde 3-phosphate. The active-site Proton donor is Asp-83. Zn(2+) contacts are provided by His-84, Asp-105, Glu-142, and His-198. Position 199 (Gly-199) interacts with dihydroxyacetone phosphate. Zn(2+) is bound at residue His-232. Residues Gly-233–Ser-235 and Asn-275–Thr-278 each bind dihydroxyacetone phosphate.

Belongs to the class II fructose-bisphosphate aldolase family. As to quaternary structure, homodimer. Requires Zn(2+) as cofactor.

The enzyme catalyses beta-D-fructose 1,6-bisphosphate = D-glyceraldehyde 3-phosphate + dihydroxyacetone phosphate. Its pathway is carbohydrate biosynthesis; Calvin cycle. The protein operates within carbohydrate degradation; glycolysis; D-glyceraldehyde 3-phosphate and glycerone phosphate from D-glucose: step 4/4. In terms of biological role, catalyzes the aldol condensation of dihydroxyacetone phosphate (DHAP or glycerone-phosphate) with glyceraldehyde 3-phosphate (G3P) to form fructose 1,6-bisphosphate (FBP) in gluconeogenesis and the reverse reaction in glycolysis. In Cupriavidus necator (strain ATCC 17699 / DSM 428 / KCTC 22496 / NCIMB 10442 / H16 / Stanier 337) (Ralstonia eutropha), this protein is Fructose-bisphosphate aldolase, plasmid (cbbAP).